Consider the following 256-residue polypeptide: 1-(5-phosphoribosyl)-5-[(5-phosphoribosylamino)methylideneamino] imidazole-4-carboxamide isomerase (256 aa).

D8 (proton acceptor) is an active-site residue. The active-site Proton donor is D129.

The protein belongs to the HisA/HisF family.

The protein localises to the cytoplasm. It carries out the reaction 1-(5-phospho-beta-D-ribosyl)-5-[(5-phospho-beta-D-ribosylamino)methylideneamino]imidazole-4-carboxamide = 5-[(5-phospho-1-deoxy-D-ribulos-1-ylimino)methylamino]-1-(5-phospho-beta-D-ribosyl)imidazole-4-carboxamide. It functions in the pathway amino-acid biosynthesis; L-histidine biosynthesis; L-histidine from 5-phospho-alpha-D-ribose 1-diphosphate: step 4/9. This chain is 1-(5-phosphoribosyl)-5-[(5-phosphoribosylamino)methylideneamino] imidazole-4-carboxamide isomerase, found in Picosynechococcus sp. (strain ATCC 27264 / PCC 7002 / PR-6) (Agmenellum quadruplicatum).